Here is a 602-residue protein sequence, read N- to C-terminus: Isocitrate dehydrogenase kinase/phosphatase (602 aa).

ATP contacts are provided by residues 327 to 333 (APGIKGM) and K348. Residue D383 is part of the active site.

The protein belongs to the AceK family.

The protein localises to the cytoplasm. It catalyses the reaction L-seryl-[isocitrate dehydrogenase] + ATP = O-phospho-L-seryl-[isocitrate dehydrogenase] + ADP + H(+). In terms of biological role, bifunctional enzyme which can phosphorylate or dephosphorylate isocitrate dehydrogenase (IDH) on a specific serine residue. This is a regulatory mechanism which enables bacteria to bypass the Krebs cycle via the glyoxylate shunt in response to the source of carbon. When bacteria are grown on glucose, IDH is fully active and unphosphorylated, but when grown on acetate or ethanol, the activity of IDH declines drastically concomitant with its phosphorylation. This chain is Isocitrate dehydrogenase kinase/phosphatase, found in Paraburkholderia phymatum (strain DSM 17167 / CIP 108236 / LMG 21445 / STM815) (Burkholderia phymatum).